The primary structure comprises 58 residues: uncharacterized protein (58 aa).

A helical membrane pass occupies residues 18-38; the sequence is WLMIVLLFCSTGMVFLATILE.

The protein localises to the membrane. This is an uncharacterized protein from Saccharomyces cerevisiae (strain ATCC 204508 / S288c) (Baker's yeast).